We begin with the raw amino-acid sequence, 524 residues long: Cytochrome P450 704B1 (524 aa).

A helical transmembrane segment spans residues 2–22 (SLCLVIACMVTSWIFLHRWGQ). Cys471 is a binding site for heme.

This sequence belongs to the cytochrome P450 family. It depends on heme as a cofactor.

It is found in the membrane. The catalysed reaction is an omega-methyl-long-chain fatty acid + reduced [NADPH--hemoprotein reductase] + O2 = an omega-hydroxy-long-chain fatty acid + oxidized [NADPH--hemoprotein reductase] + H2O + H(+). In terms of biological role, involved in pollen wall development. Catalyzes the conversion of long-chain fatty acids to the corresponding omega-hydroxylated fatty acids. Omega-hydroxylated fatty acids, together with in-chain hydroxylated fatty acids, are key monomeric aliphatic building blocks for sporopollenin synthesis during exine formation. This is Cytochrome P450 704B1 (CYP704B1) from Arabidopsis thaliana (Mouse-ear cress).